A 392-amino-acid chain; its full sequence is Putative nickel insertion protein (392 aa).

The protein belongs to the LarC family.

The protein is Putative nickel insertion protein of Methanothrix thermoacetophila (strain DSM 6194 / JCM 14653 / NBRC 101360 / PT) (Methanosaeta thermophila).